The sequence spans 164 residues: SsrA-binding protein (164 aa).

Belongs to the SmpB family.

The protein resides in the cytoplasm. Functionally, required for rescue of stalled ribosomes mediated by trans-translation. Binds to transfer-messenger RNA (tmRNA), required for stable association of tmRNA with ribosomes. tmRNA and SmpB together mimic tRNA shape, replacing the anticodon stem-loop with SmpB. tmRNA is encoded by the ssrA gene; the 2 termini fold to resemble tRNA(Ala) and it encodes a 'tag peptide', a short internal open reading frame. During trans-translation Ala-aminoacylated tmRNA acts like a tRNA, entering the A-site of stalled ribosomes, displacing the stalled mRNA. The ribosome then switches to translate the ORF on the tmRNA; the nascent peptide is terminated with the 'tag peptide' encoded by the tmRNA and targeted for degradation. The ribosome is freed to recommence translation, which seems to be the essential function of trans-translation. This Synechococcus sp. (strain CC9311) protein is SsrA-binding protein.